The chain runs to 477 residues: Membrane-bound lytic murein transglycosylase F (477 aa).

Residues 1–22 (MTRFLLIIILGFLLTACQQVTV) form the signal peptide. A non-LT domain region spans residues 23-257 (DEPEFVPHQL…HLNEKYFGHV (235 aa)). The interval 258 to 477 (KRFDYIDTRA…AGSLSPDQPK (220 aa)) is LT domain. Glu302 is an active-site residue. The disordered stretch occupies residues 446-477 (SKQPMPEDEQNDLIAEELPSMPAGSLSPDQPK). Over residues 451–460 (PEDEQNDLIA) the composition is skewed to acidic residues.

This sequence in the N-terminal section; belongs to the bacterial solute-binding protein 3 family. In the C-terminal section; belongs to the transglycosylase Slt family.

Its subcellular location is the cell outer membrane. The enzyme catalyses Exolytic cleavage of the (1-&gt;4)-beta-glycosidic linkage between N-acetylmuramic acid (MurNAc) and N-acetylglucosamine (GlcNAc) residues in peptidoglycan, from either the reducing or the non-reducing ends of the peptidoglycan chains, with concomitant formation of a 1,6-anhydrobond in the MurNAc residue.. Its function is as follows. Murein-degrading enzyme that degrades murein glycan strands and insoluble, high-molecular weight murein sacculi, with the concomitant formation of a 1,6-anhydromuramoyl product. Lytic transglycosylases (LTs) play an integral role in the metabolism of the peptidoglycan (PG) sacculus. Their lytic action creates space within the PG sacculus to allow for its expansion as well as for the insertion of various structures such as secretion systems and flagella. The chain is Membrane-bound lytic murein transglycosylase F from Shewanella sp. (strain W3-18-1).